Reading from the N-terminus, the 273-residue chain is Phosphonates import ATP-binding protein PhnC (273 aa).

The 244-residue stretch at 2-245 (LRIDKLTKRF…VAREIYGADA (244 aa)) folds into the ABC transporter domain. Residue 34–41 (GRSGAGKS) participates in ATP binding.

It belongs to the ABC transporter superfamily. Phosphonates importer (TC 3.A.1.9.1) family. The complex is composed of two ATP-binding proteins (PhnC), two transmembrane proteins (PhnE) and a solute-binding protein (PhnD).

The protein resides in the cell inner membrane. It catalyses the reaction phosphonate(out) + ATP + H2O = phosphonate(in) + ADP + phosphate + H(+). Its function is as follows. Part of the ABC transporter complex PhnCDE involved in phosphonates import. Responsible for energy coupling to the transport system. This Ruegeria pomeroyi (strain ATCC 700808 / DSM 15171 / DSS-3) (Silicibacter pomeroyi) protein is Phosphonates import ATP-binding protein PhnC.